Reading from the N-terminus, the 341-residue chain is Anthranilate phosphoribosyltransferase (341 aa).

5-phospho-alpha-D-ribose 1-diphosphate is bound by residues Gly-81, 84-85 (GD), 91-94 (NVST), 109-117 (KHGNRSVSS), and Ser-121. Gly-81 lines the anthranilate pocket. Residue Ser-93 participates in Mg(2+) binding. Asn-112 serves as a coordination point for anthranilate. Arg-167 serves as a coordination point for anthranilate. Residues Asp-226 and Glu-227 each contribute to the Mg(2+) site.

Belongs to the anthranilate phosphoribosyltransferase family. In terms of assembly, homodimer. The cofactor is Mg(2+).

It carries out the reaction N-(5-phospho-beta-D-ribosyl)anthranilate + diphosphate = 5-phospho-alpha-D-ribose 1-diphosphate + anthranilate. It functions in the pathway amino-acid biosynthesis; L-tryptophan biosynthesis; L-tryptophan from chorismate: step 2/5. Its function is as follows. Catalyzes the transfer of the phosphoribosyl group of 5-phosphorylribose-1-pyrophosphate (PRPP) to anthranilate to yield N-(5'-phosphoribosyl)-anthranilate (PRA). This chain is Anthranilate phosphoribosyltransferase, found in Saccharophagus degradans (strain 2-40 / ATCC 43961 / DSM 17024).